The chain runs to 270 residues: 3-phenylpropionate-dihydrodiol/cinnamic acid-dihydrodiol dehydrogenase (270 aa).

An NAD(+)-binding site is contributed by 10-34 (FITGGGSGLGLALVERFIEEGAQVA). S143 contacts substrate. Y156 serves as the catalytic Proton acceptor.

It belongs to the short-chain dehydrogenases/reductases (SDR) family.

The enzyme catalyses 3-(cis-5,6-dihydroxycyclohexa-1,3-dien-1-yl)propanoate + NAD(+) = 3-(2,3-dihydroxyphenyl)propanoate + NADH + H(+). It carries out the reaction (2E)-3-(cis-5,6-dihydroxycyclohexa-1,3-dien-1-yl)prop-2-enoate + NAD(+) = (2E)-3-(2,3-dihydroxyphenyl)prop-2-enoate + NADH + H(+). Its pathway is aromatic compound metabolism; 3-phenylpropanoate degradation. In terms of biological role, converts 3-phenylpropionate-dihydrodiol (PP-dihydrodiol) and cinnamic acid-dihydrodiol (CI-dihydrodiol) into 3-(2,3-dihydroxylphenyl)propanoic acid (DHPP) and 2,3-dihydroxicinnamic acid (DHCI), respectively. The polypeptide is 3-phenylpropionate-dihydrodiol/cinnamic acid-dihydrodiol dehydrogenase (Escherichia coli (strain SMS-3-5 / SECEC)).